We begin with the raw amino-acid sequence, 163 residues long: MALTKEQTQHLYHKLLDMQKELSGEKKETESMTEEVGELSNGVDNHMADHGTLVTDRMTDQTVKEIDRELLEEVNRALQKMKDGTYGVCEKTGQEIPYERLEAVPYARMTVEAQADVEDDLETDAPSYEREFHEQVKDLSNKETIDQKSSQTYEILDREQDSK.

Over residues 19–30 (QKELSGEKKETE) the composition is skewed to basic and acidic residues. 2 disordered regions span residues 19-55 (QKELSGEKKETESMTEEVGELSNGVDNHMADHGTLVT) and 115-163 (ADVE…QDSK). Residues 89-123 (CEKTGQEIPYERLEAVPYARMTVEAQADVEDDLET) form a dksA C4-type; degenerate zinc finger. Residues 127–146 (SYEREFHEQVKDLSNKETID) show a composition bias toward basic and acidic residues.

The protein is General stress protein 16O (yocK) of Bacillus subtilis (strain 168).